A 74-amino-acid polypeptide reads, in one-letter code: MATKSKYQDKQIEALLNDLIVTLEKHKAPVDLSLMALGNMITNILVTNVQSPQQREVLAEAFSSALKNSLKSAK.

The protein belongs to the UPF0352 family.

The sequence is that of UPF0352 protein HAPS_0210 from Glaesserella parasuis serovar 5 (strain SH0165) (Haemophilus parasuis).